An 89-amino-acid polypeptide reads, in one-letter code: uncharacterized protein (89 aa).

This is an uncharacterized protein from Archaeoglobus fulgidus (strain ATCC 49558 / DSM 4304 / JCM 9628 / NBRC 100126 / VC-16).